Consider the following 288-residue polypeptide: Homoserine kinase (288 aa).

Residue 79-89 participates in ATP binding; sequence PPARGLGSSSA.

This sequence belongs to the GHMP kinase family. Homoserine kinase subfamily.

It is found in the cytoplasm. The enzyme catalyses L-homoserine + ATP = O-phospho-L-homoserine + ADP + H(+). The protein operates within amino-acid biosynthesis; L-threonine biosynthesis; L-threonine from L-aspartate: step 4/5. Functionally, catalyzes the ATP-dependent phosphorylation of L-homoserine to L-homoserine phosphate. This is Homoserine kinase from Listeria monocytogenes serotype 4a (strain HCC23).